We begin with the raw amino-acid sequence, 178 residues long: Large ribosomal subunit protein uL6 (178 aa).

Belongs to the universal ribosomal protein uL6 family. As to quaternary structure, part of the 50S ribosomal subunit.

Its function is as follows. This protein binds to the 23S rRNA, and is important in its secondary structure. It is located near the subunit interface in the base of the L7/L12 stalk, and near the tRNA binding site of the peptidyltransferase center. The sequence is that of Large ribosomal subunit protein uL6 from Buchnera aphidicola subsp. Acyrthosiphon pisum (strain APS) (Acyrthosiphon pisum symbiotic bacterium).